A 441-amino-acid chain; its full sequence is Keratin, type I cytoskeletal 15 (441 aa).

The interval 2-91 is head; it reads LLLGHASTST…GGSDLLLGTS (90 aa). Positions 92 to 127 are coil 1A; it reads GKEAMQNLNDRLASYLDKVRSLEGKNHELELKIKDW. The region spanning 92–407 is the IF rod domain; that stretch reads GKEAMQNLND…MLLDSEDSKG (316 aa). A linker 1 region spans residues 128–149; that stretch reads YSQVIPGTGGPDARDYGHLEKE. Residues 150-241 form a coil 1B region; sequence IEDLQNKVNN…KNHEEDMKAA (92 aa). Residues 242-261 are linker 12; sequence SSGIAGQVNVELDAAPGTNL. Positions 262–403 are coil 2; it reads LDELDACRRD…ATYRMLLDSE (142 aa). Residues 404 to 441 are tail; sequence DSKGSIINHKILTAIEKLVDGIVLSTEVLEKQIPVLSY.

It belongs to the intermediate filament family. As to quaternary structure, heterotetramer of two type I and two type II keratins. In terms of tissue distribution, expressed in skin.

The protein is Keratin, type I cytoskeletal 15 (KRT15) of Protopterus aethiopicus (Marbled lungfish).